We begin with the raw amino-acid sequence, 92 residues long: Signal recognition particle 19 kDa protein (92 aa).

It belongs to the SRP19 family. Part of the signal recognition particle protein translocation system, which is composed of SRP and FtsY. Archaeal SRP consists of a 7S RNA molecule of 300 nucleotides and two protein subunits: SRP54 and SRP19.

It is found in the cytoplasm. Involved in targeting and insertion of nascent membrane proteins into the cytoplasmic membrane. Binds directly to 7S RNA and mediates binding of the 54 kDa subunit of the SRP. The protein is Signal recognition particle 19 kDa protein of Methanosphaera stadtmanae (strain ATCC 43021 / DSM 3091 / JCM 11832 / MCB-3).